Reading from the N-terminus, the 404-residue chain is Riboflavin biosynthesis protein RibBA (404 aa).

A DHBP synthase region spans residues 1–204 (MEELKLNTIE…IRDLIAYRLK (204 aa)). Residues 30 to 31 (RE), aspartate 35, 143 to 147 (RAGHT), and glutamate 167 contribute to the D-ribulose 5-phosphate site. Glutamate 31 serves as a coordination point for Mg(2+). Histidine 146 contributes to the Mg(2+) binding site. Positions 205–404 (QESLVEKGVE…RMGHTLHFNK (200 aa)) are GTP cyclohydrolase II. Residue 255–259 (RVHSS) participates in GTP binding. Positions 260, 271, and 273 each coordinate Zn(2+). GTP contacts are provided by residues glutamine 276, 298 to 300 (EGR), and threonine 320. The active-site Proton acceptor; for GTP cyclohydrolase activity is the aspartate 332. Arginine 334 serves as the catalytic Nucleophile; for GTP cyclohydrolase activity. GTP-binding residues include threonine 355 and lysine 360.

The protein in the N-terminal section; belongs to the DHBP synthase family. It in the C-terminal section; belongs to the GTP cyclohydrolase II family. It depends on Mg(2+) as a cofactor. Requires Mn(2+) as cofactor. The cofactor is Zn(2+).

The enzyme catalyses D-ribulose 5-phosphate = (2S)-2-hydroxy-3-oxobutyl phosphate + formate + H(+). It carries out the reaction GTP + 4 H2O = 2,5-diamino-6-hydroxy-4-(5-phosphoribosylamino)-pyrimidine + formate + 2 phosphate + 3 H(+). It participates in cofactor biosynthesis; riboflavin biosynthesis; 2-hydroxy-3-oxobutyl phosphate from D-ribulose 5-phosphate: step 1/1. The protein operates within cofactor biosynthesis; riboflavin biosynthesis; 5-amino-6-(D-ribitylamino)uracil from GTP: step 1/4. In terms of biological role, catalyzes the conversion of D-ribulose 5-phosphate to formate and 3,4-dihydroxy-2-butanone 4-phosphate. Catalyzes the conversion of GTP to 2,5-diamino-6-ribosylamino-4(3H)-pyrimidinone 5'-phosphate (DARP), formate and pyrophosphate. In Phocaeicola vulgatus (strain ATCC 8482 / DSM 1447 / JCM 5826 / CCUG 4940 / NBRC 14291 / NCTC 11154) (Bacteroides vulgatus), this protein is Riboflavin biosynthesis protein RibBA.